The chain runs to 350 residues: Small ribosomal subunit biogenesis GTPase RsgA (350 aa).

Polar residues predominate over residues 1 to 17 (MSKNKLSKGQQRRVQAN). Positions 1 to 35 (MSKNKLSKGQQRRVQANHQRRLRTDRKPELDDSQL) are disordered. A CP-type G domain is found at 103 to 273 (TSVLTRPDLY…VIDSPGVREF (171 aa)). GTP-binding positions include 159–162 (NKID) and 213–221 (GQSGVGKSS). Zn(2+)-binding residues include Cys297, Cys302, His304, and Cys310.

Belongs to the TRAFAC class YlqF/YawG GTPase family. RsgA subfamily. In terms of assembly, monomer. Associates with 30S ribosomal subunit, binds 16S rRNA. Zn(2+) is required as a cofactor.

It is found in the cytoplasm. One of several proteins that assist in the late maturation steps of the functional core of the 30S ribosomal subunit. Helps release RbfA from mature subunits. May play a role in the assembly of ribosomal proteins into the subunit. Circularly permuted GTPase that catalyzes slow GTP hydrolysis, GTPase activity is stimulated by the 30S ribosomal subunit. The protein is Small ribosomal subunit biogenesis GTPase RsgA of Yersinia enterocolitica serotype O:8 / biotype 1B (strain NCTC 13174 / 8081).